We begin with the raw amino-acid sequence, 328 residues long: P2Y purinoceptor 3 (328 aa).

Residues 1–22 (MSMANFTGGRNSCTFHEEFKQV) are Extracellular-facing. Asn-5 carries N-linked (GlcNAc...) asparagine glycosylation. The chain crosses the membrane as a helical span at residues 23–43 (LLPLVYSVVFLLGLPLNAVVI). The Cytoplasmic segment spans residues 44-57 (GQIWLARKALTRTT). A helical transmembrane segment spans residues 58–78 (IYMLNLAMADLLYVCSLPLLI). Topologically, residues 79–96 (YNYTQKDYWPFGDFTCKF) are extracellular. A disulfide bridge links Cys-94 with Cys-172. The chain crosses the membrane as a helical span at residues 97-117 (VRFQFYTNLHGSILFLTCISV). Over 118–139 (QRYMGICHPLASWHKKKGKKLT) the chain is Cytoplasmic. A helical membrane pass occupies residues 140–160 (WLVCAAVWFIVIAQCLPTFVF). Residues 161-189 (ASTGTQRNRTVCYDLSPPDRSTSYFPYGI) lie on the Extracellular side of the membrane. The helical transmembrane segment at 190–210 (TLTITGFLLPFAAILACYCSM) threads the bilayer. Residues 211 to 231 (ARILCQKDELIGLAVHKKKDK) are Cytoplasmic-facing. Residues 232 to 252 (AVRMIIIVVIVFSISFFPFHL) form a helical membrane-spanning segment. The Extracellular segment spans residues 253 to 275 (TKTIYLIVRSSASLPCPTLQAFA). The chain crosses the membrane as a helical span at residues 276–298 (IAYKCTRPFASMNSVLDPILFYF). The Cytoplasmic portion of the chain corresponds to 299 to 323 (TQRKFRESTRYLLDKMSSKWRQDHC).

The protein belongs to the G-protein coupled receptor 1 family.

It localises to the cell membrane. In terms of biological role, receptor for extracellular ADP &gt; UTP &gt; ATP = UDP. The activity of this receptor is mediated by G proteins which activate a phosphatidylinositol-calcium second messenger system. This is P2Y purinoceptor 3 (P2RY3) from Gallus gallus (Chicken).